Here is a 210-residue protein sequence, read N- to C-terminus: Cytochrome c biogenesis ATP-binding export protein CcmA (210 aa).

One can recognise an ABC transporter domain in the interval 3 to 205 (LHLQAAGLAC…KPSGYRELNL (203 aa)). Residue 37-44 (GPNGSGKT) participates in ATP binding.

It belongs to the ABC transporter superfamily. CcmA exporter (TC 3.A.1.107) family. As to quaternary structure, the complex is composed of two ATP-binding proteins (CcmA) and two transmembrane proteins (CcmB).

Its subcellular location is the cell inner membrane. It carries out the reaction heme b(in) + ATP + H2O = heme b(out) + ADP + phosphate + H(+). In terms of biological role, part of the ABC transporter complex CcmAB involved in the biogenesis of c-type cytochromes; once thought to export heme, this seems not to be the case, but its exact role is uncertain. Responsible for energy coupling to the transport system. This is Cytochrome c biogenesis ATP-binding export protein CcmA from Pseudomonas putida (strain GB-1).